Here is a 146-residue protein sequence, read N- to C-terminus: D-aminoacyl-tRNA deacylase (146 aa).

The short motif at 137-138 (GP) is the Gly-cisPro motif, important for rejection of L-amino acids element.

Belongs to the DTD family. As to quaternary structure, homodimer.

The protein localises to the cytoplasm. It catalyses the reaction glycyl-tRNA(Ala) + H2O = tRNA(Ala) + glycine + H(+). The enzyme catalyses a D-aminoacyl-tRNA + H2O = a tRNA + a D-alpha-amino acid + H(+). In terms of biological role, an aminoacyl-tRNA editing enzyme that deacylates mischarged D-aminoacyl-tRNAs. Also deacylates mischarged glycyl-tRNA(Ala), protecting cells against glycine mischarging by AlaRS. Acts via tRNA-based rather than protein-based catalysis; rejects L-amino acids rather than detecting D-amino acids in the active site. By recycling D-aminoacyl-tRNA to D-amino acids and free tRNA molecules, this enzyme counteracts the toxicity associated with the formation of D-aminoacyl-tRNA entities in vivo and helps enforce protein L-homochirality. This is D-aminoacyl-tRNA deacylase from Hahella chejuensis (strain KCTC 2396).